The primary structure comprises 365 residues: Probable dual-specificity RNA methyltransferase RlmN (365 aa).

Glu-99 acts as the Proton acceptor in catalysis. One can recognise a Radical SAM core domain in the interval 105–344 (QSYGLSVCVT…CVVRQEHGTD (240 aa)). Residues Cys-112 and Cys-349 are joined by a disulfide bond. The [4Fe-4S] cluster site is built by Cys-119, Cys-123, and Cys-126. S-adenosyl-L-methionine-binding positions include 171 to 172 (GE), Ser-203, 227 to 229 (SLH), and Asn-305. Cys-349 functions as the S-methylcysteine intermediate in the catalytic mechanism.

The protein belongs to the radical SAM superfamily. RlmN family. The cofactor is [4Fe-4S] cluster.

The protein localises to the cytoplasm. The enzyme catalyses adenosine(2503) in 23S rRNA + 2 reduced [2Fe-2S]-[ferredoxin] + 2 S-adenosyl-L-methionine = 2-methyladenosine(2503) in 23S rRNA + 5'-deoxyadenosine + L-methionine + 2 oxidized [2Fe-2S]-[ferredoxin] + S-adenosyl-L-homocysteine. The catalysed reaction is adenosine(37) in tRNA + 2 reduced [2Fe-2S]-[ferredoxin] + 2 S-adenosyl-L-methionine = 2-methyladenosine(37) in tRNA + 5'-deoxyadenosine + L-methionine + 2 oxidized [2Fe-2S]-[ferredoxin] + S-adenosyl-L-homocysteine. Functionally, specifically methylates position 2 of adenine 2503 in 23S rRNA and position 2 of adenine 37 in tRNAs. This Lactococcus lactis subsp. cremoris (strain SK11) protein is Probable dual-specificity RNA methyltransferase RlmN.